The chain runs to 117 residues: Ribonuclease P protein component (117 aa).

This sequence belongs to the RnpA family. In terms of assembly, consists of a catalytic RNA component (M1 or rnpB) and a protein subunit.

The enzyme catalyses Endonucleolytic cleavage of RNA, removing 5'-extranucleotides from tRNA precursor.. In terms of biological role, RNaseP catalyzes the removal of the 5'-leader sequence from pre-tRNA to produce the mature 5'-terminus. It can also cleave other RNA substrates such as 4.5S RNA. The protein component plays an auxiliary but essential role in vivo by binding to the 5'-leader sequence and broadening the substrate specificity of the ribozyme. The protein is Ribonuclease P protein component of Nocardioides sp. (strain ATCC BAA-499 / JS614).